Consider the following 377-residue polypeptide: Queuine tRNA-ribosyltransferase (377 aa).

Asp89 (proton acceptor) is an active-site residue. Substrate contacts are provided by residues 89 to 93 (DSGGF), Asp143, Gln188, and Gly215. The RNA binding stretch occupies residues 246–252 (GVGKPED). Asp265 (nucleophile) is an active-site residue. Positions 270-274 (TRNAR) are RNA binding; important for wobble base 34 recognition. Zn(2+) is bound by residues Cys303, Cys305, Cys308, and His334.

The protein belongs to the queuine tRNA-ribosyltransferase family. As to quaternary structure, homodimer. Within each dimer, one monomer is responsible for RNA recognition and catalysis, while the other monomer binds to the replacement base PreQ1. Zn(2+) is required as a cofactor.

It catalyses the reaction 7-aminomethyl-7-carbaguanine + guanosine(34) in tRNA = 7-aminomethyl-7-carbaguanosine(34) in tRNA + guanine. It participates in tRNA modification; tRNA-queuosine biosynthesis. In terms of biological role, catalyzes the base-exchange of a guanine (G) residue with the queuine precursor 7-aminomethyl-7-deazaguanine (PreQ1) at position 34 (anticodon wobble position) in tRNAs with GU(N) anticodons (tRNA-Asp, -Asn, -His and -Tyr). Catalysis occurs through a double-displacement mechanism. The nucleophile active site attacks the C1' of nucleotide 34 to detach the guanine base from the RNA, forming a covalent enzyme-RNA intermediate. The proton acceptor active site deprotonates the incoming PreQ1, allowing a nucleophilic attack on the C1' of the ribose to form the product. After dissociation, two additional enzymatic reactions on the tRNA convert PreQ1 to queuine (Q), resulting in the hypermodified nucleoside queuosine (7-(((4,5-cis-dihydroxy-2-cyclopenten-1-yl)amino)methyl)-7-deazaguanosine). This Acinetobacter baumannii (strain SDF) protein is Queuine tRNA-ribosyltransferase.